A 356-amino-acid chain; its full sequence is Glutamine synthetase nodule isozyme (356 aa).

A GS beta-grasp domain is found at 19 to 99 (IIAEYIWIGG…VMCDAYTPAG (81 aa)). The segment at 41–66 (PGPVSDPSKLPKWNYDGSSTGQAPGE) is disordered. A GS catalytic domain is found at 106-356 (KRHNAAKIFS…IADTTILWKP (251 aa)).

It belongs to the glutamine synthetase family. Homooctamer.

It localises to the cytoplasm. It carries out the reaction L-glutamate + NH4(+) + ATP = L-glutamine + ADP + phosphate + H(+). The sequence is that of Glutamine synthetase nodule isozyme from Vigna aconitifolia (Moth bean).